The sequence spans 330 residues: uncharacterized protein (330 aa).

The region spanning 96 to 256 is the JmjC domain; it reads AALEFDFTDL…LMLAALRKKL (161 aa). Fe cation contacts are provided by H145, D147, and H224.

It belongs to the ROX family. Fe(2+) serves as cofactor.

This is an uncharacterized protein from Bacillus subtilis (strain 168).